The following is a 194-amino-acid chain: Probable molybdenum cofactor guanylyltransferase (194 aa).

Residues 8-10, K20, and D99 each bind GTP; that span reads LAG. Residue D99 participates in Mg(2+) binding.

It belongs to the MobA family. Requires Mg(2+) as cofactor.

It is found in the cytoplasm. The enzyme catalyses Mo-molybdopterin + GTP + H(+) = Mo-molybdopterin guanine dinucleotide + diphosphate. Functionally, transfers a GMP moiety from GTP to Mo-molybdopterin (Mo-MPT) cofactor (Moco or molybdenum cofactor) to form Mo-molybdopterin guanine dinucleotide (Mo-MGD) cofactor. The sequence is that of Probable molybdenum cofactor guanylyltransferase from Synechococcus elongatus (strain ATCC 33912 / PCC 7942 / FACHB-805) (Anacystis nidulans R2).